Here is a 333-residue protein sequence, read N- to C-terminus: Olfactory receptor 1078 (333 aa).

The Extracellular segment spans residues 1-25 (MDSSNRTRVSEFLLLGFVENKDLQP). Asparagine 5 carries N-linked (GlcNAc...) asparagine glycosylation. A helical membrane pass occupies residues 26 to 50 (LIYGLFLSMYLVTVIGNISIIVAII). The Cytoplasmic segment spans residues 51–57 (SDPCLHT). A helical membrane pass occupies residues 58–79 (PMYFFLSNLSFVDICFISTTVP). Over 80–100 (KMLVNIQTQNNVITYAGCITQ) the chain is Extracellular. A disulfide bridge connects residues cysteine 97 and cysteine 189. The chain crosses the membrane as a helical span at residues 101 to 120 (IYFFLLFVELDNFLLTIMAY). At 121–139 (DRYVAICHPMHYTVIMNYK) the chain is on the cytoplasmic side. Residues 140-158 (LCGFLVLVSWIVSVLHALF) traverse the membrane as a helical segment. At 159 to 196 (QSLMMLALPFCTHLEIPHYFCEPNQVIQLTCSDAFLND) the chain is on the extracellular side. A helical transmembrane segment spans residues 197–219 (LVIYFTLVLLATVPLAGIFYSYF). Over 220–236 (KIVSSICAISSVHGKYK) the chain is Cytoplasmic. Residues 237–260 (AFSTCASHLSVVSLFYCTGLGVYL) form a helical membrane-spanning segment. Topologically, residues 261-272 (SSAANNSSQASA) are extracellular. The helical transmembrane segment at 273–292 (TASVMYTVVTPMVNPFIYSL) threads the bilayer. At 293-333 (RNKDVKSVLKKTLCEEVIRSPPSLLHFFLVLCHLPCFIFCY) the chain is on the cytoplasmic side.

It belongs to the G-protein coupled receptor 1 family. As to expression, olfactory epithelium.

Its subcellular location is the cell membrane. In terms of biological role, odorant receptor. This chain is Olfactory receptor 1078 (Olr1078), found in Rattus norvegicus (Rat).